The chain runs to 471 residues: Glutamate--tRNA ligase (471 aa).

Positions 9–19 match the 'HIGH' region motif; that stretch reads PSPTGYLHVGG. Zn(2+) contacts are provided by Cys-98, Cys-100, Cys-125, and His-127. Residues 237 to 241 carry the 'KMSKS' region motif; the sequence is KLSKR. Lys-240 is a binding site for ATP.

This sequence belongs to the class-I aminoacyl-tRNA synthetase family. Glutamate--tRNA ligase type 1 subfamily. Monomer. Zn(2+) is required as a cofactor.

Its subcellular location is the cytoplasm. The enzyme catalyses tRNA(Glu) + L-glutamate + ATP = L-glutamyl-tRNA(Glu) + AMP + diphosphate. Its function is as follows. Catalyzes the attachment of glutamate to tRNA(Glu) in a two-step reaction: glutamate is first activated by ATP to form Glu-AMP and then transferred to the acceptor end of tRNA(Glu). This Shigella sonnei (strain Ss046) protein is Glutamate--tRNA ligase.